A 336-amino-acid polypeptide reads, in one-letter code: Phenylalanine--tRNA ligase alpha subunit (336 aa).

A Mg(2+)-binding site is contributed by Glu-259.

It belongs to the class-II aminoacyl-tRNA synthetase family. Phe-tRNA synthetase alpha subunit type 1 subfamily. Tetramer of two alpha and two beta subunits. It depends on Mg(2+) as a cofactor.

Its subcellular location is the cytoplasm. The enzyme catalyses tRNA(Phe) + L-phenylalanine + ATP = L-phenylalanyl-tRNA(Phe) + AMP + diphosphate + H(+). In Tropheryma whipplei (strain Twist) (Whipple's bacillus), this protein is Phenylalanine--tRNA ligase alpha subunit.